The primary structure comprises 298 residues: Lipoyl synthase (298 aa).

Positions 40, 45, 51, 67, 71, 74, and 280 each coordinate [4Fe-4S] cluster. The region spanning alanine 53 to serine 269 is the Radical SAM core domain.

The protein belongs to the radical SAM superfamily. Lipoyl synthase family. The cofactor is [4Fe-4S] cluster.

Its subcellular location is the cytoplasm. The catalysed reaction is [[Fe-S] cluster scaffold protein carrying a second [4Fe-4S](2+) cluster] + N(6)-octanoyl-L-lysyl-[protein] + 2 oxidized [2Fe-2S]-[ferredoxin] + 2 S-adenosyl-L-methionine + 4 H(+) = [[Fe-S] cluster scaffold protein] + N(6)-[(R)-dihydrolipoyl]-L-lysyl-[protein] + 4 Fe(3+) + 2 hydrogen sulfide + 2 5'-deoxyadenosine + 2 L-methionine + 2 reduced [2Fe-2S]-[ferredoxin]. The protein operates within protein modification; protein lipoylation via endogenous pathway; protein N(6)-(lipoyl)lysine from octanoyl-[acyl-carrier-protein]. Its function is as follows. Catalyzes the radical-mediated insertion of two sulfur atoms into the C-6 and C-8 positions of the octanoyl moiety bound to the lipoyl domains of lipoate-dependent enzymes, thereby converting the octanoylated domains into lipoylated derivatives. The chain is Lipoyl synthase from Bacillus cereus (strain ATCC 10987 / NRS 248).